Here is a 742-residue protein sequence, read N- to C-terminus: Phosphoribosylformylglycinamidine synthase subunit PurL (742 aa).

His-54 is a catalytic residue. Tyr-57 and Lys-96 together coordinate ATP. A Mg(2+)-binding site is contributed by Glu-98. Substrate contacts are provided by residues Ser-99–His-102 and Arg-121. His-100 (proton acceptor) is an active-site residue. Asp-122 is a binding site for Mg(2+). Residue Gln-245 participates in substrate binding. Asp-273 provides a ligand contact to Mg(2+). Position 317 to 319 (Glu-317 to Gln-319) interacts with substrate. ATP is bound by residues Asp-500 and Gly-537. A Mg(2+)-binding site is contributed by Asn-538. Ser-540 contacts substrate.

The protein belongs to the FGAMS family. In terms of assembly, monomer. Part of the FGAM synthase complex composed of 1 PurL, 1 PurQ and 2 PurS subunits.

The protein localises to the cytoplasm. The enzyme catalyses N(2)-formyl-N(1)-(5-phospho-beta-D-ribosyl)glycinamide + L-glutamine + ATP + H2O = 2-formamido-N(1)-(5-O-phospho-beta-D-ribosyl)acetamidine + L-glutamate + ADP + phosphate + H(+). Its pathway is purine metabolism; IMP biosynthesis via de novo pathway; 5-amino-1-(5-phospho-D-ribosyl)imidazole from N(2)-formyl-N(1)-(5-phospho-D-ribosyl)glycinamide: step 1/2. Part of the phosphoribosylformylglycinamidine synthase complex involved in the purines biosynthetic pathway. Catalyzes the ATP-dependent conversion of formylglycinamide ribonucleotide (FGAR) and glutamine to yield formylglycinamidine ribonucleotide (FGAM) and glutamate. The FGAM synthase complex is composed of three subunits. PurQ produces an ammonia molecule by converting glutamine to glutamate. PurL transfers the ammonia molecule to FGAR to form FGAM in an ATP-dependent manner. PurS interacts with PurQ and PurL and is thought to assist in the transfer of the ammonia molecule from PurQ to PurL. The protein is Phosphoribosylformylglycinamidine synthase subunit PurL of Oceanobacillus iheyensis (strain DSM 14371 / CIP 107618 / JCM 11309 / KCTC 3954 / HTE831).